Consider the following 236-residue polypeptide: MLLLISPINTEEALEAIEGGADIVDVKNPAEGSLGANFPWVIRRVREMTPEDMLVSATLGDVPYKPGTVSLAAMGALVSGADYIKVGLYGTRNYDEAVDVMKNVVRAVKDQSDAIVVAAGYADAHRVGAVEPMEIPRVAADSGADLAMLDTAVKDGKTLFDFMDMEKLESFVSAARDHGLKSALAGSVGREHLKPLHEIGCDVVGIRGAACVGGDRNTGRIHRDAVRELKELLDSF.

Lys27 acts as the Schiff-base intermediate with substrate in catalysis. Residue Lys85 is the Proton acceptor of the active site.

It belongs to the MfnB family.

The enzyme catalyses 2 D-glyceraldehyde 3-phosphate = 4-(hydroxymethyl)-2-furancarboxaldehyde phosphate + phosphate + 2 H2O. It participates in cofactor biosynthesis; methanofuran biosynthesis. Functionally, catalyzes the formation of 4-(hydroxymethyl)-2-furancarboxaldehyde phosphate (4-HFC-P) from two molecules of glyceraldehyde-3-P (GA-3-P). This chain is (5-formylfuran-3-yl)methyl phosphate synthase, found in Methanothermobacter thermautotrophicus (strain ATCC 29096 / DSM 1053 / JCM 10044 / NBRC 100330 / Delta H) (Methanobacterium thermoautotrophicum).